The primary structure comprises 199 residues: Protein C (199 aa).

Polar residues-rich tracts occupy residues 19–34 (QLIS…SYSA) and 43–57 (KTTQ…SAPP). A disordered region spans residues 19–67 (QLISPRPSTSLNSYSAPTPKKTYRKTTQSTQEPSNSAPPSVNQKSNQQK). The segment covering 58 to 67 (SVNQKSNQQK) has biased composition (low complexity).

This sequence belongs to the respirovirus protein C family.

The chain is Protein C (P/V/C) from Human parainfluenza 3 virus (strain Wash/47885/57) (HPIV-3).